Consider the following 159-residue polypeptide: Ribosomal RNA large subunit methyltransferase H (159 aa).

Residues Leu76, Gly108, and 127-132 contribute to the S-adenosyl-L-methionine site; that span reads LSRLTF.

The protein belongs to the RNA methyltransferase RlmH family. As to quaternary structure, homodimer.

Its subcellular location is the cytoplasm. The enzyme catalyses pseudouridine(1915) in 23S rRNA + S-adenosyl-L-methionine = N(3)-methylpseudouridine(1915) in 23S rRNA + S-adenosyl-L-homocysteine + H(+). Specifically methylates the pseudouridine at position 1915 (m3Psi1915) in 23S rRNA. In Syntrophomonas wolfei subsp. wolfei (strain DSM 2245B / Goettingen), this protein is Ribosomal RNA large subunit methyltransferase H.